Consider the following 552-residue polypeptide: 4-coumarate--CoA ligase-like 4 (552 aa).

Residues 182–205 form a disordered region; sequence ISATTPDPARRKDRVTQDDPATLL. Over residues 189–198 the composition is skewed to basic and acidic residues; the sequence is PARRKDRVTQ. Residues serine 207, serine 208, glycine 209, threonine 210, threonine 211, and lysine 215 each contribute to the ATP site. Tyrosine 256 contributes to the (E)-4-coumaroyl-AMP binding site. Residue lysine 277 participates in CoA binding. The tract at residues 279–346 is SBD1; the sequence is ELPEMLRSIN…EKYPQVEILQ (68 aa). (E)-4-coumaroyl-AMP is bound by residues glycine 324, glutamine 346, glycine 347, and threonine 351. ATP is bound by residues glutamine 346, glycine 347, threonine 351, aspartate 432, and arginine 447. The interval 347-411 is SBD2; the sequence is GYGLTESTAI…IRGPYVMKGY (65 aa). 2 residues coordinate (E)-4-coumaroyl-AMP: lysine 449 and lysine 453. CoA contacts are provided by lysine 455 and glycine 456. Residue lysine 538 participates in ATP binding.

The protein belongs to the ATP-dependent AMP-binding enzyme family. Mg(2+) serves as cofactor.

The enzyme catalyses (E)-4-coumarate + ATP + CoA = (E)-4-coumaroyl-CoA + AMP + diphosphate. The catalysed reaction is (E)-4-coumarate + ATP + H(+) = (E)-4-coumaroyl-AMP + diphosphate. It catalyses the reaction (E)-4-coumaroyl-AMP + CoA = (E)-4-coumaroyl-CoA + AMP + H(+). Carboxylate--CoA ligase that may use 4-coumarate as substrate. Follows a two-step reaction mechanism, wherein the carboxylate substrate first undergoes adenylation by ATP, followed by a thioesterification in the presence of CoA to yield the final CoA thioester. The chain is 4-coumarate--CoA ligase-like 4 (4CLL4) from Oryza sativa subsp. japonica (Rice).